The following is a 363-amino-acid chain: Peptide chain release factor 1 (363 aa).

Glutamine 237 carries the N5-methylglutamine modification.

It belongs to the prokaryotic/mitochondrial release factor family. In terms of processing, methylated by PrmC. Methylation increases the termination efficiency of RF1.

The protein resides in the cytoplasm. In terms of biological role, peptide chain release factor 1 directs the termination of translation in response to the peptide chain termination codons UAG and UAA. In Marinobacter nauticus (strain ATCC 700491 / DSM 11845 / VT8) (Marinobacter aquaeolei), this protein is Peptide chain release factor 1.